A 349-amino-acid polypeptide reads, in one-letter code: N-lysine methyltransferase KMT5A (349 aa).

The segment at 18–46 (AAVAATAPGPEMVEQRGPGRPRSDGENVF) is disordered. Residue Ser-57 is modified to Phosphoserine. The disordered stretch occupies residues 65-207 (RSPLQEENSV…SEERKKNELI (143 aa)). A compositionally biased stretch (basic and acidic residues) spans 107-119 (VKSDEQKSKDTRR). The residue at position 138 (Thr-138) is a Phosphothreonine. Residues 154-170 (ALKKSLKGKQAPRKKSQ) are compositionally biased toward basic residues. Over residues 192-207 (SKAELQSEERKKNELI) the composition is skewed to basic and acidic residues. The 122-residue stretch at 213–334 (EGMKIDLIDG…AGEELLYDYG (122 aa)) folds into the SET domain. Residues 223–225 (KGR), Tyr-268, and 295–296 (NH) contribute to the S-adenosyl-L-methionine site.

Belongs to the class V-like SAM-binding methyltransferase superfamily. Histone-lysine methyltransferase family. PR/SET subfamily. Interacts with L3MBTL1. Interacts with SIRT2 (phosphorylated form); the interaction is direct, stimulates KMT5A-mediated methyltransferase activity at histone H4 'Lys-20' (H4K20me1) and is increased in a H(2)O(2)-induced oxidative stress-dependent manner. Ubiquitinated and degraded by the DCX(DTL) complex.

The protein localises to the nucleus. It is found in the chromosome. The enzyme catalyses L-lysyl(20)-[histone H4] + S-adenosyl-L-methionine = N(6)-methyl-L-lysyl(20)-[histone H4] + S-adenosyl-L-homocysteine + H(+). It carries out the reaction L-lysyl-[protein] + S-adenosyl-L-methionine = N(6)-methyl-L-lysyl-[protein] + S-adenosyl-L-homocysteine + H(+). Protein-lysine N-methyltransferase that monomethylates both histones and non-histone proteins. Specifically monomethylates 'Lys-20' of histone H4 (H4K20me1). H4K20me1 is enriched during mitosis and represents a specific tag for epigenetic transcriptional repression. Mainly functions in euchromatin regions, thereby playing a central role in the silencing of euchromatic genes. Required for cell proliferation, probably by contributing to the maintenance of proper higher-order structure of DNA during mitosis. Involved in chromosome condensation and proper cytokinesis. Nucleosomes are preferred as substrate compared to free histones. Mediates monomethylation of p53/TP53 at 'Lys-382', leading to repress p53/TP53-target genes. Plays a negative role in TGF-beta response regulation and a positive role in cell migration. The sequence is that of N-lysine methyltransferase KMT5A from Mus musculus (Mouse).